A 462-amino-acid chain; its full sequence is ATP synthase subunit beta (462 aa).

Position 152 to 159 (152 to 159 (GGAGVGKT)) interacts with ATP.

Belongs to the ATPase alpha/beta chains family. In terms of assembly, F-type ATPases have 2 components, CF(1) - the catalytic core - and CF(0) - the membrane proton channel. CF(1) has five subunits: alpha(3), beta(3), gamma(1), delta(1), epsilon(1). CF(0) has three main subunits: a(1), b(2) and c(9-12). The alpha and beta chains form an alternating ring which encloses part of the gamma chain. CF(1) is attached to CF(0) by a central stalk formed by the gamma and epsilon chains, while a peripheral stalk is formed by the delta and b chains.

It localises to the cell inner membrane. It carries out the reaction ATP + H2O + 4 H(+)(in) = ADP + phosphate + 5 H(+)(out). In terms of biological role, produces ATP from ADP in the presence of a proton gradient across the membrane. The catalytic sites are hosted primarily by the beta subunits. The protein is ATP synthase subunit beta of Shewanella amazonensis (strain ATCC BAA-1098 / SB2B).